The following is a 152-amino-acid chain: Photosystem II extrinsic protein U, chloroplastic (152 aa).

Residues 1–35 (MDSTAFVGAAAPLRVAAAARSTICMAAADDKPVVS) constitute a chloroplast transit peptide. A thylakoid-targeting transit peptide spans 36–59 (RRAALTGAAAAALAAVAGSLPALA).

The protein belongs to the PsbU family. PSII is composed of 1 copy each of membrane proteins PsbA, PsbB, PsbC, PsbD, PsbE, PsbF, PsbH, PsbI, PsbJ, PsbK, PsbL, PsbM, PsbT, PsbX, PsbY, PsbZ, Psb30/Ycf12, at least 3 peripheral proteins of the oxygen-evolving complex and a large number of cofactors. It forms dimeric complexes. The oxygen-evolving complex in red algae is composed of PsbO (OEC33), PsbQ', cytochrome c-550 and PsbU. Predicted to be translocated into the thylakoid lumen by the Tat system.

It localises to the plastid. The protein localises to the chloroplast thylakoid membrane. Functionally, one of the extrinsic, lumenal subunits of photosystem II (PSII). PSII is a light-driven water plastoquinone oxidoreductase, using light energy to abstract electrons from H(2)O, generating a proton gradient subsequently used for ATP formation. The extrinsic proteins stabilize the structure of photosystem II oxygen-evolving complex (OEC), the ion environment of oxygen evolution and protect the OEC against heat-induced inactivation. The chain is Photosystem II extrinsic protein U, chloroplastic from Pyropia yezoensis (Susabi-nori).